Consider the following 885-residue polypeptide: Leucine--tRNA ligase (885 aa).

The 'HIGH' region signature appears at 46–56; the sequence is PYPSGALHMGH. The 'KMSKS' region motif lies at 638–642; sequence KMSKS. An ATP-binding site is contributed by Lys641.

Belongs to the class-I aminoacyl-tRNA synthetase family.

The protein resides in the cytoplasm. The catalysed reaction is tRNA(Leu) + L-leucine + ATP = L-leucyl-tRNA(Leu) + AMP + diphosphate. The polypeptide is Leucine--tRNA ligase (Xanthomonas campestris pv. campestris (strain B100)).